The sequence spans 88 residues: Apolipoprotein C-I (88 aa).

Residues 1 to 26 form the signal peptide; the sequence is MRLILSLPVLVVVLSMVLEGPAPAQA.

It belongs to the apolipoprotein C1 family.

It localises to the secreted. Its function is as follows. Inhibitor of lipoprotein binding to the low density lipoprotein (LDL) receptor, LDL receptor-related protein, and very low density lipoprotein (VLDL) receptor. Associates with high density lipoproteins (HDL) and the triacylglycerol-rich lipoproteins in the plasma and makes up about 10% of the protein of the VLDL and 2% of that of HDL. Appears to interfere directly with fatty acid uptake and is also the major plasma inhibitor of cholesteryl ester transfer protein (CETP). Binds free fatty acids and reduces their intracellular esterification. Modulates the interaction of APOE with beta-migrating VLDL and inhibits binding of beta-VLDL to the LDL receptor-related protein. The polypeptide is Apolipoprotein C-I (APOC1) (Lycaon pictus (African wild dog)).